The primary structure comprises 445 residues: Argininosuccinate synthase (445 aa).

ATP-binding positions include 17 to 25 and Ala43; that span reads AFSGGLDTS. Tyr99 lines the L-citrulline pocket. Residues Gly129 and Thr131 each contribute to the ATP site. Positions 131, 135, and 136 each coordinate L-aspartate. L-citrulline is bound at residue Asn135. Asp136 serves as a coordination point for ATP. Residues Arg139 and Ser192 each coordinate L-citrulline. Asp194 lines the ATP pocket. L-citrulline-binding residues include Thr201, Glu203, and Glu280.

Belongs to the argininosuccinate synthase family. Type 2 subfamily. In terms of assembly, homotetramer.

The protein resides in the cytoplasm. It catalyses the reaction L-citrulline + L-aspartate + ATP = 2-(N(omega)-L-arginino)succinate + AMP + diphosphate + H(+). It functions in the pathway amino-acid biosynthesis; L-arginine biosynthesis; L-arginine from L-ornithine and carbamoyl phosphate: step 2/3. The protein is Argininosuccinate synthase of Burkholderia cenocepacia (strain HI2424).